The primary structure comprises 191 residues: Hypoxanthine/guanine phosphoribosyltransferase (191 aa).

Belongs to the purine/pyrimidine phosphoribosyltransferase family. Archaeal HPRT subfamily. As to quaternary structure, homodimer.

The protein localises to the cytoplasm. It catalyses the reaction IMP + diphosphate = hypoxanthine + 5-phospho-alpha-D-ribose 1-diphosphate. It carries out the reaction GMP + diphosphate = guanine + 5-phospho-alpha-D-ribose 1-diphosphate. It functions in the pathway purine metabolism; IMP biosynthesis via salvage pathway; IMP from hypoxanthine: step 1/1. Catalyzes a salvage reaction resulting in the formation of IMP that is energically less costly than de novo synthesis. This is Hypoxanthine/guanine phosphoribosyltransferase from Methanocella paludicola (strain DSM 17711 / JCM 13418 / NBRC 101707 / SANAE).